The primary structure comprises 280 residues: Energy-coupling factor transporter ATP-binding protein EcfA1 (280 aa).

The ABC transporter domain maps to 6–241; sequence LRIENISFQY…SHMLQEIGLD (236 aa). 40–47 contributes to the ATP binding site; sequence GQNGSGKS.

The protein belongs to the ABC transporter superfamily. Energy-coupling factor EcfA family. Forms a stable energy-coupling factor (ECF) transporter complex composed of 2 membrane-embedded substrate-binding proteins (S component), 2 ATP-binding proteins (A component) and 2 transmembrane proteins (T component).

Its subcellular location is the cell membrane. Its function is as follows. ATP-binding (A) component of a common energy-coupling factor (ECF) ABC-transporter complex. Unlike classic ABC transporters this ECF transporter provides the energy necessary to transport a number of different substrates. This Bacillus cereus (strain ATCC 14579 / DSM 31 / CCUG 7414 / JCM 2152 / NBRC 15305 / NCIMB 9373 / NCTC 2599 / NRRL B-3711) protein is Energy-coupling factor transporter ATP-binding protein EcfA1.